A 207-amino-acid chain; its full sequence is Thiamine-phosphate synthase (207 aa).

4-amino-2-methyl-5-(diphosphooxymethyl)pyrimidine-binding positions include 35-39 (QYRDK) and asparagine 67. Mg(2+) contacts are provided by aspartate 68 and aspartate 86. Threonine 105 provides a ligand contact to 4-amino-2-methyl-5-(diphosphooxymethyl)pyrimidine. 2-[(2R,5Z)-2-carboxy-4-methylthiazol-5(2H)-ylidene]ethyl phosphate is bound at residue 132 to 134 (SVT). Lysine 135 contacts 4-amino-2-methyl-5-(diphosphooxymethyl)pyrimidine. Residue glycine 162 coordinates 2-[(2R,5Z)-2-carboxy-4-methylthiazol-5(2H)-ylidene]ethyl phosphate.

This sequence belongs to the thiamine-phosphate synthase family. Mg(2+) is required as a cofactor.

It catalyses the reaction 2-[(2R,5Z)-2-carboxy-4-methylthiazol-5(2H)-ylidene]ethyl phosphate + 4-amino-2-methyl-5-(diphosphooxymethyl)pyrimidine + 2 H(+) = thiamine phosphate + CO2 + diphosphate. The enzyme catalyses 2-(2-carboxy-4-methylthiazol-5-yl)ethyl phosphate + 4-amino-2-methyl-5-(diphosphooxymethyl)pyrimidine + 2 H(+) = thiamine phosphate + CO2 + diphosphate. It carries out the reaction 4-methyl-5-(2-phosphooxyethyl)-thiazole + 4-amino-2-methyl-5-(diphosphooxymethyl)pyrimidine + H(+) = thiamine phosphate + diphosphate. It functions in the pathway cofactor biosynthesis; thiamine diphosphate biosynthesis; thiamine phosphate from 4-amino-2-methyl-5-diphosphomethylpyrimidine and 4-methyl-5-(2-phosphoethyl)-thiazole: step 1/1. Functionally, condenses 4-methyl-5-(beta-hydroxyethyl)thiazole monophosphate (THZ-P) and 2-methyl-4-amino-5-hydroxymethyl pyrimidine pyrophosphate (HMP-PP) to form thiamine monophosphate (TMP). In Pseudomonas putida (strain W619), this protein is Thiamine-phosphate synthase.